The primary structure comprises 225 residues: UPF0173 metal-dependent hydrolase Pars_0810 (225 aa).

Belongs to the UPF0173 family.

In Pyrobaculum arsenaticum (strain DSM 13514 / JCM 11321 / PZ6), this protein is UPF0173 metal-dependent hydrolase Pars_0810.